A 664-amino-acid polypeptide reads, in one-letter code: uncharacterized protein (664 aa).

The signal sequence occupies residues 1–25 (MSWKRYLKWVSFAIIPLLFANTSIK). A helical transmembrane segment spans residues 625 to 645 (IIVYLIIGFSVLVLFITVFIY).

It belongs to the MG414/MG415 family.

It is found in the cell membrane. This is an uncharacterized protein from Mycoplasma genitalium (strain ATCC 33530 / DSM 19775 / NCTC 10195 / G37) (Mycoplasmoides genitalium).